Reading from the N-terminus, the 953-residue chain is Coatomer subunit beta (953 aa).

Residue T2 is modified to N-acetylthreonine. 6 HEAT repeats span residues 96-131 (HEMI…KEAE), 132-168 (LLEP…NFEH), 240-276 (SERA…SAPT), 277-314 (AIKA…HPAH), 316-353 (RVLQ…SRNV), and 396-433 (DMAA…RFDN). K494 bears the N6-acetyllysine mark.

As to quaternary structure, oligomeric complex that consists of at least the alpha, beta, beta', gamma, delta, epsilon and zeta subunits. Interacts with CAPN8 and PRKCE. Interacts with SCYL1. Interacts with COPG1. Interacts with ARF1 (myristoylated); this interaction is required for binding of COPB1 to Golgi membranes. Interacts (via trunk domain) with ARF1 (via switch I region); the interaction is direct. Interacts with KCNK2 (via N-terminus); this interaction increases the channel-mediated whole cell currents and promotes plasma membrane expression of KCNK2. Interacts with STX17. Interacts with TMEM115. Interacts with TMEM41B. As to expression, high expression in the lung, kidney, skeletal muscle and small intestine, and lower level of expression in heart, liver, spleen, stomach and fat.

It is found in the cytoplasm. It localises to the golgi apparatus membrane. The protein localises to the cytoplasmic vesicle. Its subcellular location is the COPI-coated vesicle membrane. The protein resides in the cell membrane. It is found in the endoplasmic reticulum-Golgi intermediate compartment. In terms of biological role, the coatomer is a cytosolic protein complex that binds to dilysine motifs and reversibly associates with Golgi non-clathrin-coated vesicles, which further mediate biosynthetic protein transport from the ER, via the Golgi up to the trans Golgi network. Coatomer complex is required for budding from Golgi membranes, and is essential for the retrograde Golgi-to-ER transport of dilysine-tagged proteins. In mammals, the coatomer can only be recruited by membranes associated to ADP-ribosylation factors (ARFs), which are small GTP-binding proteins; the complex also influences the Golgi structural integrity, as well as the processing, activity, and endocytic recycling of LDL receptors. Plays a functional role in facilitating the transport of kappa-type opioid receptor mRNAs into axons and enhances translation of these proteins. Required for limiting lipid storage in lipid droplets. Involved in lipid homeostasis by regulating the presence of perilipin family members PLIN2 and PLIN3 at the lipid droplet surface and promoting the association of adipocyte surface triglyceride lipase (PNPLA2) with the lipid droplet to mediate lipolysis. Involved in the Golgi disassembly and reassembly processes during cell cycle. Involved in autophagy by playing a role in early endosome function. Plays a role in organellar compartmentalization of secretory compartments including endoplasmic reticulum (ER)-Golgi intermediate compartment (ERGIC), Golgi, trans-Golgi network (TGN) and recycling endosomes, and in biosynthetic transport of CAV1. The polypeptide is Coatomer subunit beta (Sus scrofa (Pig)).